Reading from the N-terminus, the 375-residue chain is Probable mitochondrial tRNA-specific 2-thiouridylase 1 (375 aa).

Residues 7-14 (GMSGGVDS) and Met33 each bind ATP. The segment at 94–96 (VPD) is interaction with target base in tRNA. Catalysis depends on Cys99, which acts as the Nucleophile. Cys99 and Cys205 are disulfide-bonded. Gly124 contacts ATP. The segment at 154–156 (KDQ) is interaction with tRNA. Cys205 acts as the Cysteine persulfide intermediate in catalysis. An interaction with tRNA region spans residues 319–320 (QR).

This sequence belongs to the MnmA/TRMU family.

It is found in the mitochondrion. The catalysed reaction is 5-taurinomethyluridine(34) in tRNA + S-sulfanyl-L-cysteinyl-[protein] + AH2 + ATP = 5-taurinomethyl-2-thiouridine(34) in tRNA + L-cysteinyl-[protein] + A + AMP + diphosphate + H(+). Its function is as follows. Catalyzes the 2-thiolation of uridine at the wobble position (U34) of mitochondrial tRNA(Lys), tRNA(Glu) and tRNA(Gln). Required for the formation of 5-taurinomethyl-2-thiouridine (tm5s2U) of mitochondrial tRNA(Lys), tRNA(Glu), and tRNA(Gln) at the wobble position. ATP is required to activate the C2 atom of the wobble base. This is Probable mitochondrial tRNA-specific 2-thiouridylase 1 from Caenorhabditis elegans.